We begin with the raw amino-acid sequence, 1033 residues long: Probable beta-glucosidase E (1033 aa).

The tract at residues 1 to 71 is disordered; the sequence is MAPPDSTHGG…RSGSYKLRPV (71 aa). Residues 1–161 are Cytoplasmic-facing; the sequence is MAPPDSTHGG…PVKYARIWWR (161 aa). 2 stretches are compositionally biased toward basic and acidic residues: residues 11–20 and 59–71; these read SFRDHLKTND and DLER…LRPV. The helical; Signal-anchor for type II membrane protein transmembrane segment at 162 to 182 threads the bilayer; it reads TLLAVVVTLVVVVWGFLSFAV. Over 183–1033 the chain is Extracellular; sequence SHREEPTVWP…SRDLPLMGEY (851 aa). N-linked (GlcNAc...) asparagine glycosylation is found at asparagine 224, asparagine 232, and asparagine 418. The active site involves aspartate 446. Residues asparagine 489, asparagine 528, asparagine 593, asparagine 909, asparagine 918, and asparagine 976 are each glycosylated (N-linked (GlcNAc...) asparagine).

This sequence belongs to the glycosyl hydrolase 3 family.

It localises to the cell membrane. It carries out the reaction Hydrolysis of terminal, non-reducing beta-D-glucosyl residues with release of beta-D-glucose.. Its pathway is glycan metabolism; cellulose degradation. Functionally, beta-glucosidases are one of a number of cellulolytic enzymes involved in the degradation of cellulosic biomass. Catalyzes the last step releasing glucose from the inhibitory cellobiose. This is Probable beta-glucosidase E (bglE) from Aspergillus fumigatus (strain CBS 144.89 / FGSC A1163 / CEA10) (Neosartorya fumigata).